The primary structure comprises 267 residues: Very long chain fatty acid elongase 6 (267 aa).

N-linked (GlcNAc...) asparagine glycosylation is present at asparagine 2. 7 helical membrane passes run 34 to 51 (FLFSALYAAFIFGGRHLM), 70 to 90 (LAVFSIFGALRTGAYMLYILM), 111 to 131 (FWAYAFVLSKAPELGDTIFII), 136 to 156 (KLIFLHWYHHITVLLYSWYSY), 159 to 179 (MVAGGGWFMTMNYGVHAVMYS), 197 to 217 (FITLSQITQMLMGCVINYLVF), and 234 to 254 (IFWSSLMYLSYLVLFCHFFFE).

This sequence belongs to the ELO family. ELOVL6 subfamily. N-Glycosylated. Highly expressed in adrenal gland, liver, white adipose tissue (WAT), adult and fetal brain, cerebellum, spinal cord, testis, skin and peripheral nerve; where lipogenesis and steroidogenesis are active. Weakly expressed in kidney, heart, skeletal muscle, lung, and spleen.

The protein localises to the endoplasmic reticulum membrane. It carries out the reaction a very-long-chain acyl-CoA + malonyl-CoA + H(+) = a very-long-chain 3-oxoacyl-CoA + CO2 + CoA. The enzyme catalyses hexadecanoyl-CoA + malonyl-CoA + H(+) = 3-oxooctadecanoyl-CoA + CO2 + CoA. The catalysed reaction is (9Z)-hexadecenoyl-CoA + malonyl-CoA + H(+) = 3-oxo-(11Z)-octadecenoyl-CoA + CO2 + CoA. It catalyses the reaction dodecanoyl-CoA + malonyl-CoA + H(+) = 3-oxotetradecanoyl-CoA + CO2 + CoA. It carries out the reaction tetradecanoyl-CoA + malonyl-CoA + H(+) = 3-oxohexadecanoyl-CoA + CO2 + CoA. The enzyme catalyses (9Z)-octadecenoyl-CoA + malonyl-CoA + H(+) = 3-oxo-(11Z)-eicosenoyl-CoA + CO2 + CoA. The catalysed reaction is (9Z,12Z)-octadecadienoyl-CoA + malonyl-CoA + H(+) = (11Z,14Z)-3-oxoicosa-11,14-dienoyl-CoA + CO2 + CoA. It catalyses the reaction (9Z,12Z,15Z)-octadecatrienoyl-CoA + malonyl-CoA + H(+) = (11Z,14Z,17Z)-3-oxoeicosatrienoyl-CoA + CO2 + CoA. It functions in the pathway lipid metabolism; fatty acid biosynthesis. The reaction is stimulated by the presence of HSD17B12, the enzyme catalyzing the second step of the elongation cycle. Its function is as follows. Catalyzes the first and rate-limiting reaction of the four reactions that constitute the long-chain fatty acids elongation cycle. This endoplasmic reticulum-bound enzymatic process allows the addition of 2 carbons to the chain of long- and very long-chain fatty acids (VLCFAs) per cycle. Condensing enzyme that elongates fatty acids with 12, 14 and 16 carbons with higher activity toward C16:0 acyl-CoAs. Catalyzes the synthesis of unsaturated C16 long chain fatty acids and, to a lesser extent, C18:0 and those with low desaturation degree. May participate in the production of saturated and monounsaturated VLCFAs of different chain lengths that are involved in multiple biological processes as precursors of membrane lipids and lipid mediators. This chain is Very long chain fatty acid elongase 6, found in Mus musculus (Mouse).